The primary structure comprises 119 residues: V-type proton ATPase subunit F (119 aa).

This sequence belongs to the V-ATPase F subunit family. As to quaternary structure, V-ATPase is a heteromultimeric enzyme composed of a peripheral catalytic V1 complex (components A to H) attached to an integral membrane V0 proton pore complex (components: a, c, c', c'', d, e, f and VOA1).

It is found in the vacuole membrane. Subunit of the V1 complex of vacuolar(H+)-ATPase (V-ATPase), a multisubunit enzyme composed of a peripheral complex (V1) that hydrolyzes ATP and a membrane integral complex (V0) that translocates protons. V-ATPase is responsible for acidifying and maintaining the pH of intracellular compartments. This Vanderwaltozyma polyspora (strain ATCC 22028 / DSM 70294 / BCRC 21397 / CBS 2163 / NBRC 10782 / NRRL Y-8283 / UCD 57-17) (Kluyveromyces polysporus) protein is V-type proton ATPase subunit F (VMA7).